The primary structure comprises 460 residues: MLQIYNTLSKTKEVFTPLVGNQVRMYVCGMTVYDYCHLGHGRSMVAFDVITRWLRHRGYDLTYVRNITDIDDKIINRANENGEPFDVLTERMIAAMHEDEARLNILKPDQEPRATDHIAGMHAMIQTLIDKGYAYAPGNGDVYYRVGRFAGYGKLSRRRVEDLRIGARIEPGEAKEDPLDFVLWKGAKPGEPSWSSPWGEGRPGWHIECSVMSTCCLGDSFDIHGGGNDLEFPHHENEIAQSEAATGKPYAKSWLHCGMITINGEKMSKSLGNFFTIREVLEKYHPEVVRYLLIASHYRSPINYSEENLREAKAALDRFYNALKGLPEAAPAEAAEHVERFAAAMDDDFNTAGACSVLFELAREVNRLRDSDLPAAAALAARLKQLAGLLGVLQLEPEAFLQAGAEGKVDAAEVEALIQARLEARAAKNWAESDRIRDQLTAMGVVLEDGKGGTTWRLAD.

C28 is a binding site for Zn(2+). A 'HIGH' region motif is present at residues M30–H40. C209, H234, and E238 together coordinate Zn(2+). The 'KMSKS' region signature appears at K266–S270. An ATP-binding site is contributed by K269.

The protein belongs to the class-I aminoacyl-tRNA synthetase family. Monomer. Zn(2+) is required as a cofactor.

It is found in the cytoplasm. The enzyme catalyses tRNA(Cys) + L-cysteine + ATP = L-cysteinyl-tRNA(Cys) + AMP + diphosphate. The chain is Cysteine--tRNA ligase from Pseudomonas paraeruginosa (strain DSM 24068 / PA7) (Pseudomonas aeruginosa (strain PA7)).